The chain runs to 831 residues: Phenylalanine--tRNA ligase beta subunit (831 aa).

The tRNA-binding domain occupies 44–155; the sequence is GPVDGPVTVG…GAAEPGADGA (112 aa). A B5 domain is found at 414 to 489; it reads WSPPPIRMGV…RLEGLEVIPS (76 aa). Residues aspartate 467, aspartate 473, glutamate 476, and glutamate 477 each contribute to the Mg(2+) site. An FDX-ACB domain is found at 737-830; it reads SPYPAVFQDV…AAERVGAVLR (94 aa).

The protein belongs to the phenylalanyl-tRNA synthetase beta subunit family. Type 1 subfamily. In terms of assembly, tetramer of two alpha and two beta subunits. Mg(2+) serves as cofactor.

It is found in the cytoplasm. The catalysed reaction is tRNA(Phe) + L-phenylalanine + ATP = L-phenylalanyl-tRNA(Phe) + AMP + diphosphate + H(+). This is Phenylalanine--tRNA ligase beta subunit (pheT) from Mycobacterium tuberculosis (strain ATCC 25618 / H37Rv).